The following is a 101-amino-acid chain: Small ribosomal subunit protein uS14A (101 aa).

The disordered stretch occupies residues 31-59 (IRSPASSPEQRVAAQSELNRQPRDASAVR).

It belongs to the universal ribosomal protein uS14 family. As to quaternary structure, part of the 30S ribosomal subunit. Contacts proteins S3 and S10.

Functionally, binds 16S rRNA, required for the assembly of 30S particles and may also be responsible for determining the conformation of the 16S rRNA at the A site. The sequence is that of Small ribosomal subunit protein uS14A from Mycobacteroides abscessus (strain ATCC 19977 / DSM 44196 / CCUG 20993 / CIP 104536 / JCM 13569 / NCTC 13031 / TMC 1543 / L948) (Mycobacterium abscessus).